Here is a 239-residue protein sequence, read N- to C-terminus: 1-(5-phosphoribosyl)-5-[(5-phosphoribosylamino)methylideneamino] imidazole-4-carboxamide isomerase (239 aa).

The active-site Proton acceptor is the D12. D133 acts as the Proton donor in catalysis.

Belongs to the HisA/HisF family.

The protein localises to the cytoplasm. The enzyme catalyses 1-(5-phospho-beta-D-ribosyl)-5-[(5-phospho-beta-D-ribosylamino)methylideneamino]imidazole-4-carboxamide = 5-[(5-phospho-1-deoxy-D-ribulos-1-ylimino)methylamino]-1-(5-phospho-beta-D-ribosyl)imidazole-4-carboxamide. The protein operates within amino-acid biosynthesis; L-histidine biosynthesis; L-histidine from 5-phospho-alpha-D-ribose 1-diphosphate: step 4/9. This is 1-(5-phosphoribosyl)-5-[(5-phosphoribosylamino)methylideneamino] imidazole-4-carboxamide isomerase from Sulfurihydrogenibium sp. (strain YO3AOP1).